A 356-amino-acid polypeptide reads, in one-letter code: Kelch domain-containing protein VC_1773 (356 aa).

Kelch repeat units lie at residues 72 to 125 (KLYV…SLSP), 163 to 210 (TIFM…HKNN), 288 to 331 (NLYA…ASNG), and 333 to 355 (AMYV…SLLM).

The protein is Kelch domain-containing protein VC_1773 of Vibrio cholerae serotype O1 (strain ATCC 39315 / El Tor Inaba N16961).